Reading from the N-terminus, the 357-residue chain is Holliday junction branch migration complex subunit RuvB (357 aa).

The tract at residues 1–27 is disordered; sequence MGRFDDAGAQDAEPDDRDVSPALTVGE. A large ATPase domain (RuvB-L) region spans residues 1–195; that stretch reads MGRFDDAGAQ…FGFTAHMDFY (195 aa). ATP-binding positions include Leu-34, Arg-35, Gly-76, Lys-79, Thr-80, Ser-81, 142–144, Arg-185, Tyr-195, and Arg-232; that span reads EDF. Residue Thr-80 coordinates Mg(2+). The small ATPAse domain (RuvB-S) stretch occupies residues 196–266; that stretch reads EPAELERVLA…IAKAALEVYD (71 aa). The head domain (RuvB-H) stretch occupies residues 269-357; it reads ELGLDRLDRA…TGLGQTGLFD (89 aa). The DNA site is built by Arg-324 and Arg-329.

It belongs to the RuvB family. In terms of assembly, homohexamer. Forms an RuvA(8)-RuvB(12)-Holliday junction (HJ) complex. HJ DNA is sandwiched between 2 RuvA tetramers; dsDNA enters through RuvA and exits via RuvB. An RuvB hexamer assembles on each DNA strand where it exits the tetramer. Each RuvB hexamer is contacted by two RuvA subunits (via domain III) on 2 adjacent RuvB subunits; this complex drives branch migration. In the full resolvosome a probable DNA-RuvA(4)-RuvB(12)-RuvC(2) complex forms which resolves the HJ.

It is found in the cytoplasm. It carries out the reaction ATP + H2O = ADP + phosphate + H(+). Its function is as follows. The RuvA-RuvB-RuvC complex processes Holliday junction (HJ) DNA during genetic recombination and DNA repair, while the RuvA-RuvB complex plays an important role in the rescue of blocked DNA replication forks via replication fork reversal (RFR). RuvA specifically binds to HJ cruciform DNA, conferring on it an open structure. The RuvB hexamer acts as an ATP-dependent pump, pulling dsDNA into and through the RuvAB complex. RuvB forms 2 homohexamers on either side of HJ DNA bound by 1 or 2 RuvA tetramers; 4 subunits per hexamer contact DNA at a time. Coordinated motions by a converter formed by DNA-disengaged RuvB subunits stimulates ATP hydrolysis and nucleotide exchange. Immobilization of the converter enables RuvB to convert the ATP-contained energy into a lever motion, pulling 2 nucleotides of DNA out of the RuvA tetramer per ATP hydrolyzed, thus driving DNA branch migration. The RuvB motors rotate together with the DNA substrate, which together with the progressing nucleotide cycle form the mechanistic basis for DNA recombination by continuous HJ branch migration. Branch migration allows RuvC to scan DNA until it finds its consensus sequence, where it cleaves and resolves cruciform DNA. This is Holliday junction branch migration complex subunit RuvB from Mycobacterium sp. (strain JLS).